Reading from the N-terminus, the 1151-residue chain is Importin beta (1151 aa).

HEAT repeat units follow at residues 1–36, 37–82, 83–132, 133–175, 176–222, 223–269, 270–316, 317–377, 378–416, 417–453, 454–495, 496–540, 541–593, 594–642, 643–704, 705–756, 757–811, 812–880, 881–932, 933–978, 979–1027, 1028–1074, 1075–1120, and 1121–1151; these read MDLA…KQEE, PASY…GNGN, PECV…VAQF, PEFF…TKIG, GKAI…DSVI, PNSV…AVLK, PMVK…RAKK, AISE…KVIF, PLIK…LVTK, EDIV…EDYA, PTFQ…HLKK, AETY…LKND, FADM…AGTL, PQLF…PETF, PKYM…MRKT, PAAF…TVAS, PPAV…SYTE, TVNK…ALGD, LSLD…KYLS, PANS…YEGD, PGLA…AQAF, PTEL…ARND, PNFM…VLTQ, and IAGH…SVRQ.

It belongs to the importin beta family.

It localises to the nucleus intermembrane space. Its subcellular location is the cytoplasm. It is found in the nucleus. Functionally, functions in nuclear protein import as nuclear transport receptor. Involved in encystation process. Constitutive expression enhances cyst production and increases transcription of endogenous genes involved in encystation. Level of mRNA of the transcriptional factor myb1-like protein increases in early stages of the encystation process followed by increased mRNAs of the cyst wall proteins cwp1-3. The sequence is that of Importin beta from Giardia intestinalis (strain ATCC 50803 / WB clone C6) (Giardia lamblia).